Here is a 140-residue protein sequence, read N- to C-terminus: Large ribosomal subunit protein uL11 (140 aa).

It belongs to the universal ribosomal protein uL11 family. Part of the ribosomal stalk of the 50S ribosomal subunit. Interacts with L10 and the large rRNA to form the base of the stalk. L10 forms an elongated spine to which L12 dimers bind in a sequential fashion forming a multimeric L10(L12)X complex. One or more lysine residues are methylated.

Forms part of the ribosomal stalk which helps the ribosome interact with GTP-bound translation factors. In Gemmatimonas aurantiaca (strain DSM 14586 / JCM 11422 / NBRC 100505 / T-27), this protein is Large ribosomal subunit protein uL11.